Consider the following 457-residue polypeptide: Putative HD domain-containing protein L394 (457 aa).

An HD domain is found at 65-206; sequence RLEHSIGVYD…GIDVDKFDYL (142 aa).

In Acanthamoeba polyphaga mimivirus (APMV), this protein is Putative HD domain-containing protein L394.